The following is a 424-amino-acid chain: L-glutamine:2-deoxy-scyllo-inosose aminotransferase (424 aa).

An N6-(pyridoxal phosphate)lysine modification is found at Lys-202.

This sequence belongs to the DegT/DnrJ/EryC1 family. L-glutamine:2-deoxy-scyllo-inosose/scyllo-inosose aminotransferase subfamily. It depends on pyridoxal 5'-phosphate as a cofactor.

The enzyme catalyses 2-deoxy-L-scyllo-inosose + L-glutamine = 2-deoxy-scyllo-inosamine + 2-oxoglutaramate. It carries out the reaction 3-amino-2,3-dideoxy-scyllo-inosose + L-glutamine = 2-deoxystreptamine + 2-oxoglutaramate. Its pathway is metabolic intermediate biosynthesis; 2-deoxystreptamine biosynthesis; 2-deoxystreptamine from D-glucose 6-phosphate: step 2/4. It functions in the pathway antibiotic biosynthesis; lividomycin biosynthesis. Functionally, catalyzes the PLP-dependent transamination of 2-deoxy-scyllo-inosose (2-DOI) to form 2-deoxy-scyllo-inosamine (2-DOIA) using L-glutamine as the amino donor. Also catalyzes the transamination of 3-amino-2,3-dideoxy-scyllo-inosose (keto-2-DOIA) into 2-deoxystreptamine (2-DOS). The polypeptide is L-glutamine:2-deoxy-scyllo-inosose aminotransferase (livS) (Streptomyces lividus).